Here is a 975-residue protein sequence, read N- to C-terminus: Glycine dehydrogenase (decarboxylating) (975 aa).

Lysine 723 carries the N6-(pyridoxal phosphate)lysine modification.

The protein belongs to the GcvP family. In terms of assembly, the glycine cleavage system is composed of four proteins: P, T, L and H. It depends on pyridoxal 5'-phosphate as a cofactor.

The catalysed reaction is N(6)-[(R)-lipoyl]-L-lysyl-[glycine-cleavage complex H protein] + glycine + H(+) = N(6)-[(R)-S(8)-aminomethyldihydrolipoyl]-L-lysyl-[glycine-cleavage complex H protein] + CO2. The glycine cleavage system catalyzes the degradation of glycine. The P protein binds the alpha-amino group of glycine through its pyridoxal phosphate cofactor; CO(2) is released and the remaining methylamine moiety is then transferred to the lipoamide cofactor of the H protein. This chain is Glycine dehydrogenase (decarboxylating), found in Burkholderia ambifaria (strain MC40-6).